The chain runs to 248 residues: Anamorsin homolog (248 aa).

An N-terminal SAM-like domain region spans residues 4-129; sequence FKGLQKSLYI…ETGSSARLSF (126 aa). The segment at 130 to 161 is linker; that stretch reads AKKNANAVNVWKISGDDEELIDEEELLDEEDK. 4 residues coordinate [2Fe-2S] cluster: cysteine 172, cysteine 181, cysteine 184, and cysteine 186. Positions 172–186 are fe-S binding site A; it reads CSTTGKRKACKNCSC. The [4Fe-4S] cluster site is built by cysteine 209, cysteine 212, cysteine 220, and cysteine 223. 2 short sequence motifs (cx2C motif) span residues 209–212 and 220–223; these read CGNC and CSTC. A fe-S binding site B region spans residues 209 to 223; it reads CGNCYLGDAFRCSTC.

Belongs to the anamorsin family. As to quaternary structure, monomer. [2Fe-2S] cluster is required as a cofactor. Requires [4Fe-4S] cluster as cofactor.

It localises to the cytoplasm. It is found in the mitochondrion intermembrane space. Component of the cytosolic iron-sulfur (Fe-S) protein assembly (CIA) machinery. Required for the maturation of extramitochondrial Fe-S proteins. Part of an electron transfer chain functioning in an early step of cytosolic Fe-S biogenesis, facilitating the de novo assembly of a [4Fe-4S] cluster on the cytosolic Fe-S scaffold complex. Electrons are transferred from NADPH via a FAD- and FMN-containing diflavin oxidoreductase. Together with the diflavin oxidoreductase, also required for the assembly of the diferric tyrosyl radical cofactor of ribonucleotide reductase (RNR), probably by providing electrons for reduction during radical cofactor maturation in the catalytic small subunit. The protein is Anamorsin homolog of Drosophila simulans (Fruit fly).